The primary structure comprises 796 residues: Polyribonucleotide nucleotidyltransferase (796 aa).

Mg(2+) contacts are provided by Asp-490 and Asp-496. The KH domain maps to 557-616 (PRIESIFINKDKIRNVIGSGGKNIRDICEKTGAKIEIIQDGTVMIYAVNNEAVEYAKSMI). The region spanning 626–693 (GKVFEGTVVE…DREHIQLSMR (68 aa)) is the S1 motif domain. Composition is skewed to low complexity over residues 717-728 (DDSCGSTGGSSF), 747-759 (GGSS…NSNG), and 769-784 (SSNG…SNSR). A disordered region spans residues 717–796 (DDSCGSTGGS…HDVPRKPRFF (80 aa)). Residues 785–796 (NGHDVPRKPRFF) show a composition bias toward basic and acidic residues.

The protein belongs to the polyribonucleotide nucleotidyltransferase family. It depends on Mg(2+) as a cofactor.

The protein localises to the cytoplasm. It catalyses the reaction RNA(n+1) + phosphate = RNA(n) + a ribonucleoside 5'-diphosphate. Functionally, involved in mRNA degradation. Catalyzes the phosphorolysis of single-stranded polyribonucleotides processively in the 3'- to 5'-direction. This chain is Polyribonucleotide nucleotidyltransferase, found in Ehrlichia chaffeensis (strain ATCC CRL-10679 / Arkansas).